Reading from the N-terminus, the 181-residue chain is ATP-dependent protease subunit HslV (181 aa).

The active site involves Thr9. Na(+) contacts are provided by Ala166, Cys169, and Thr172.

This sequence belongs to the peptidase T1B family. HslV subfamily. A double ring-shaped homohexamer of HslV is capped on each side by a ring-shaped HslU homohexamer. The assembly of the HslU/HslV complex is dependent on binding of ATP.

It is found in the cytoplasm. It carries out the reaction ATP-dependent cleavage of peptide bonds with broad specificity.. Its activity is regulated as follows. Allosterically activated by HslU binding. Functionally, protease subunit of a proteasome-like degradation complex believed to be a general protein degrading machinery. This Staphylococcus aureus (strain JH1) protein is ATP-dependent protease subunit HslV.